We begin with the raw amino-acid sequence, 681 residues long: Elongation factor G (681 aa).

The region spanning 5-279 is the tr-type G domain; it reads KNIRNIGIIA…SIVNFLPSPI (275 aa). GTP contacts are provided by residues 14–21, 82–86, and 136–139; these read AHVDAGKT, DTPGH, and NKLD.

Belongs to the TRAFAC class translation factor GTPase superfamily. Classic translation factor GTPase family. EF-G/EF-2 subfamily.

It is found in the cytoplasm. In terms of biological role, catalyzes the GTP-dependent ribosomal translocation step during translation elongation. During this step, the ribosome changes from the pre-translocational (PRE) to the post-translocational (POST) state as the newly formed A-site-bound peptidyl-tRNA and P-site-bound deacylated tRNA move to the P and E sites, respectively. Catalyzes the coordinated movement of the two tRNA molecules, the mRNA and conformational changes in the ribosome. This Carsonella ruddii (strain PV) protein is Elongation factor G.